The following is a 403-amino-acid chain: F-box/kelch-repeat protein At5g43190 (403 aa).

The F-box domain occupies 45 to 91 (PNIWSNLPNHLLEHILSLLPFKTLLTLRSISRHLRSLILSPSFISDH). Kelch repeat units lie at residues 91-140 (HSFS…LLSS), 192-240 (KIFT…VFYN), 291-339 (ILYM…VCYH), and 343-393 (HVYC…FRWF).

The sequence is that of F-box/kelch-repeat protein At5g43190 from Arabidopsis thaliana (Mouse-ear cress).